The chain runs to 396 residues: Purine ribonucleoside efflux pump NepI (396 aa).

The Cytoplasmic portion of the chain corresponds to 1-21 (MSEFIAENRGADAITRPNWSA). Residues 22–42 (VFSVAFCVACLIIVEFLPVSL) traverse the membrane as a helical segment. Residues 43-54 (LTPMAQDLGISE) lie on the Periplasmic side of the membrane. The helical transmembrane segment at 55 to 75 (GVAGQSVTVTAFVAMFASLFI) threads the bilayer. Residues 76–85 (TQTIQATDRR) lie on the Cytoplasmic side of the membrane. A helical transmembrane segment spans residues 86–106 (YVVILFAVLLTLSCLLVSFAN). A topological domain (periplasmic) is located at residue S107. Residues 108-128 (FSLLLIGRACLGLALGGFWAI) form a helical membrane-spanning segment. Topologically, residues 129–147 (SASLTMRLVPPRTVPKALS) are cytoplasmic. A helical membrane pass occupies residues 148–168 (VIFGAVSIALVIAAPLGGFLG). Over 169–175 (ELIGWRN) the chain is Periplasmic. A helical membrane pass occupies residues 176–196 (VFNAAAAMGVLCIFWIIKSLP). The Cytoplasmic portion of the chain corresponds to 197–215 (SLPGEPSHQKQNTFRLLQR). The helical transmembrane segment at 216–236 (PGVMAGMIAIFMSFAGQFAFF) threads the bilayer. Over 237 to 255 (TYIRPVYMNLAGFGVDGLT) the chain is Periplasmic. A helical transmembrane segment spans residues 256–276 (LVLLSFGIASFVGTSLSSFIL). At 277–281 (KRSVK) the chain is on the cytoplasmic side. Residues 282–302 (LALAGAPFVLALSALVLTLWG) traverse the membrane as a helical segment. Topologically, residues 303–305 (SDK) are periplasmic. A helical membrane pass occupies residues 306-326 (IVATGVAIIWGLTFALIPVGW). Residues 327–343 (STWITRSLADQAEKAGS) lie on the Cytoplasmic side of the membrane. Residues 344–364 (IQVAVIQLANTCGAAIGGYAL) form a helical membrane-spanning segment. Residues 365 to 366 (DN) lie on the Periplasmic side of the membrane. The helical transmembrane segment at 367 to 387 (IGLTSPLMLSGTLMLLTALLV) threads the bilayer. The Cytoplasmic segment spans residues 388–396 (TAKVKMKKS).

It belongs to the major facilitator superfamily. DHA1 family. NepI (TC 2.A.1.2.26) subfamily.

The protein localises to the cell inner membrane. It carries out the reaction inosine(in) + H(+)(out) = inosine(out) + H(+)(in). It catalyses the reaction guanosine(in) + H(+)(out) = guanosine(out) + H(+)(in). In terms of biological role, involved in the efflux of purine ribonucleosides, such as inosine and guanosine. In Escherichia coli O127:H6 (strain E2348/69 / EPEC), this protein is Purine ribonucleoside efflux pump NepI.